The chain runs to 159 residues: 2-C-methyl-D-erythritol 2,4-cyclodiphosphate synthase (159 aa).

2 residues coordinate a divalent metal cation: D8 and H10. 4-CDP-2-C-methyl-D-erythritol 2-phosphate-binding positions include 8-10 (DVH) and 34-35 (HS). H42 contributes to the a divalent metal cation binding site. 4-CDP-2-C-methyl-D-erythritol 2-phosphate contacts are provided by residues 56–58 (DIG), 61–65 (FPDTD), 100–106 (AQAPKML), 132–135 (TTTE), F139, and R142.

This sequence belongs to the IspF family. Homotrimer. The cofactor is a divalent metal cation.

The catalysed reaction is 4-CDP-2-C-methyl-D-erythritol 2-phosphate = 2-C-methyl-D-erythritol 2,4-cyclic diphosphate + CMP. It functions in the pathway isoprenoid biosynthesis; isopentenyl diphosphate biosynthesis via DXP pathway; isopentenyl diphosphate from 1-deoxy-D-xylulose 5-phosphate: step 4/6. In terms of biological role, involved in the biosynthesis of isopentenyl diphosphate (IPP) and dimethylallyl diphosphate (DMAPP), two major building blocks of isoprenoid compounds. Catalyzes the conversion of 4-diphosphocytidyl-2-C-methyl-D-erythritol 2-phosphate (CDP-ME2P) to 2-C-methyl-D-erythritol 2,4-cyclodiphosphate (ME-CPP) with a corresponding release of cytidine 5-monophosphate (CMP). The polypeptide is 2-C-methyl-D-erythritol 2,4-cyclodiphosphate synthase (Salmonella dublin (strain CT_02021853)).